The primary structure comprises 1041 residues: Protein EGT2 (1041 aa).

The signal sequence occupies residues 1 to 20 (MNKLLLHLVRVISILGLANA). N-linked (GlcNAc...) asparagine glycosylation is found at asparagine 65, asparagine 103, asparagine 161, asparagine 175, asparagine 249, asparagine 332, asparagine 401, asparagine 435, asparagine 465, asparagine 485, asparagine 506, asparagine 526, asparagine 544, and asparagine 556. A disordered region spans residues 388–410 (SSSSISLSAPSSSNSTFTTPSSS). Residues 457 to 492 (SSTLSYTSNVTISVSSATQHTTTPSYVSNSTTLSSS) form repeat 1. The 9 X approximate repeats stretch occupies residues 457–962 (SSTLSYTSNV…TLKTSTFQKA (506 aa)). Tandem repeats lie at residues 577 to 606 (TVAS…ISTI) and 613 to 647 (SGTD…INTN). Asparagine 635, asparagine 636, asparagine 657, and asparagine 709 each carry an N-linked (GlcNAc...) asparagine glycan. The stretch at 716–745 (TDKSDTYSVISSTESAQVTEYDSLLPISTL) is repeat 4. Asparagine 756 carries an N-linked (GlcNAc...) asparagine glycan. 5 repeat units span residues 773 to 802 (TDKG…ISTL), 811 to 840 (TDES…ISTL), 849 to 886 (TGES…TSLS), 887 to 924 (TEES…TSLS), and 925 to 962 (TEES…FQKA). Glycine 1020 carries GPI-anchor amidated glycine lipidation. Positions 1021–1041 (AAGQLTIRIGSLLLGLISFLL) are cleaved as a propeptide — removed in mature form.

In terms of processing, the GPI-anchor is attached to the protein in the endoplasmic reticulum and serves to target the protein to the cell surface. There, the glucosamine-inositol phospholipid moiety is cleaved off and the GPI-modified mannoprotein is covalently attached via its lipidless GPI glycan remnant to the 1,6-beta-glucan of the outer cell wall layer.

The protein resides in the secreted. It is found in the cell wall. The protein localises to the membrane. In terms of biological role, seems to be involved in the correct timing of cell separation after cytokinesis, as separation of mutant daughter cells is delayed. Could either be an enzyme necessary for glucans-degradation of the cell wall at the neck region between mother and daughter cells or a regulatory protein controlling this metabolic step. This is Protein EGT2 (EGT2) from Saccharomyces cerevisiae (strain ATCC 204508 / S288c) (Baker's yeast).